The chain runs to 320 residues: tRNA pseudouridine synthase B (320 aa).

The Nucleophile role is filled by aspartate 49.

This sequence belongs to the pseudouridine synthase TruB family. Type 1 subfamily.

It catalyses the reaction uridine(55) in tRNA = pseudouridine(55) in tRNA. Functionally, responsible for synthesis of pseudouridine from uracil-55 in the psi GC loop of transfer RNAs. The polypeptide is tRNA pseudouridine synthase B (Bartonella tribocorum (strain CIP 105476 / IBS 506)).